The sequence spans 201 residues: Glycolipid transfer protein (201 aa).

Residues Ile-28–Asp-168 are glycolipid transfer protein homology domain.

Its function is as follows. Cargo transport protein that plays a key role in transport and secretion of liamocins, glycolipids (also called heavy oils) composed of a single mannitol or arabitol headgroup linked to either three, four or even six 3,5-dihydroxydecanoic ester tail-groups. The protein is Glycolipid transfer protein of Aureobasidium melanogenum (Aureobasidium pullulans var. melanogenum).